We begin with the raw amino-acid sequence, 155 residues long: SsrA-binding protein (155 aa).

Residues 132–147 (KRESIKRREQDRDIKR) are compositionally biased toward basic and acidic residues. The disordered stretch occupies residues 132 to 155 (KRESIKRREQDRDIKRQMKQFNGR).

This sequence belongs to the SmpB family.

The protein resides in the cytoplasm. Required for rescue of stalled ribosomes mediated by trans-translation. Binds to transfer-messenger RNA (tmRNA), required for stable association of tmRNA with ribosomes. tmRNA and SmpB together mimic tRNA shape, replacing the anticodon stem-loop with SmpB. tmRNA is encoded by the ssrA gene; the 2 termini fold to resemble tRNA(Ala) and it encodes a 'tag peptide', a short internal open reading frame. During trans-translation Ala-aminoacylated tmRNA acts like a tRNA, entering the A-site of stalled ribosomes, displacing the stalled mRNA. The ribosome then switches to translate the ORF on the tmRNA; the nascent peptide is terminated with the 'tag peptide' encoded by the tmRNA and targeted for degradation. The ribosome is freed to recommence translation, which seems to be the essential function of trans-translation. This chain is SsrA-binding protein, found in Streptococcus mutans serotype c (strain ATCC 700610 / UA159).